A 259-amino-acid chain; its full sequence is 5'-nucleotidase SurE (259 aa).

Positions 8, 9, 40, and 92 each coordinate a divalent metal cation.

This sequence belongs to the SurE nucleotidase family. A divalent metal cation serves as cofactor.

Its subcellular location is the cytoplasm. It catalyses the reaction a ribonucleoside 5'-phosphate + H2O = a ribonucleoside + phosphate. Functionally, nucleotidase that shows phosphatase activity on nucleoside 5'-monophosphates. This chain is 5'-nucleotidase SurE, found in Xanthomonas campestris pv. campestris (strain 8004).